A 339-amino-acid chain; its full sequence is DNA-directed RNA polymerase subunit alpha (339 aa).

Positions 1 to 233 (MVREEVAGST…DLFLPFLHAE (233 aa)) are alpha N-terminal domain (alpha-NTD). The tract at residues 266 to 339 (GIPLNCIFID…IDLLKNKLSF (74 aa)) is alpha C-terminal domain (alpha-CTD).

Belongs to the RNA polymerase alpha chain family. In terms of assembly, in plastids the minimal PEP RNA polymerase catalytic core is composed of four subunits: alpha, beta, beta', and beta''. When a (nuclear-encoded) sigma factor is associated with the core the holoenzyme is formed, which can initiate transcription.

The protein localises to the plastid. It localises to the chloroplast. The enzyme catalyses RNA(n) + a ribonucleoside 5'-triphosphate = RNA(n+1) + diphosphate. DNA-dependent RNA polymerase catalyzes the transcription of DNA into RNA using the four ribonucleoside triphosphates as substrates. This chain is DNA-directed RNA polymerase subunit alpha, found in Aegilops speltoides (Goatgrass).